Reading from the N-terminus, the 513-residue chain is Protein phosphatase 1H (513 aa).

Position 7 is a phosphoserine (Ser7). A PPM-type phosphatase domain is found at 77–506 (ATGYAEVINA…DDISVYVIPL (430 aa)). Positions 110 to 133 (ITSTPNRNSKRRSSLPNGEGLQLK) are disordered. Thr113 is modified (phosphothreonine). Phosphoserine occurs at positions 123 and 210. An Omega-N-methylarginine modification is found at Arg212. A Phosphoserine modification is found at Ser220. Thr223 is subject to Phosphothreonine. A Phosphoserine modification is found at Ser421.

The protein belongs to the PP2C family.

It is found in the nucleus. The protein resides in the cytoplasm. It carries out the reaction O-phospho-L-seryl-[protein] + H2O = L-seryl-[protein] + phosphate. The enzyme catalyses O-phospho-L-threonyl-[protein] + H2O = L-threonyl-[protein] + phosphate. Dephosphorylates CDKN1B at 'Thr-187', thus removing a signal for proteasomal degradation. This is Protein phosphatase 1H (Ppm1h) from Rattus norvegicus (Rat).